Reading from the N-terminus, the 323-residue chain is Acetyl-coenzyme A carboxylase carboxyl transferase subunit alpha (323 aa).

One can recognise a CoA carboxyltransferase C-terminal domain in the interval Arg-39–Gln-293.

Belongs to the AccA family. In terms of assembly, acetyl-CoA carboxylase is a heterohexamer composed of biotin carboxyl carrier protein (AccB), biotin carboxylase (AccC) and two subunits each of ACCase subunit alpha (AccA) and ACCase subunit beta (AccD).

The protein localises to the cytoplasm. It carries out the reaction N(6)-carboxybiotinyl-L-lysyl-[protein] + acetyl-CoA = N(6)-biotinyl-L-lysyl-[protein] + malonyl-CoA. Its pathway is lipid metabolism; malonyl-CoA biosynthesis; malonyl-CoA from acetyl-CoA: step 1/1. Functionally, component of the acetyl coenzyme A carboxylase (ACC) complex. First, biotin carboxylase catalyzes the carboxylation of biotin on its carrier protein (BCCP) and then the CO(2) group is transferred by the carboxyltransferase to acetyl-CoA to form malonyl-CoA. The sequence is that of Acetyl-coenzyme A carboxylase carboxyl transferase subunit alpha from Burkholderia multivorans (strain ATCC 17616 / 249).